Consider the following 517-residue polypeptide: Crotonobetaine/carnitine--CoA ligase (517 aa).

Belongs to the ATP-dependent AMP-binding enzyme family.

It carries out the reaction 4-(trimethylamino)butanoate + ATP + CoA = 4-(trimethylamino)butanoyl-CoA + AMP + diphosphate. The catalysed reaction is crotonobetaine + ATP + CoA = crotonobetainyl-CoA + AMP + diphosphate. The enzyme catalyses (R)-carnitine + ATP + CoA = (R)-carnitinyl-CoA + AMP + diphosphate. The protein operates within amine and polyamine metabolism; carnitine metabolism. In terms of biological role, catalyzes the transfer of CoA to carnitine, generating the initial carnitinyl-CoA needed for the CaiB reaction cycle. Also has activity toward crotonobetaine and gamma-butyrobetaine. The protein is Crotonobetaine/carnitine--CoA ligase of Salmonella arizonae (strain ATCC BAA-731 / CDC346-86 / RSK2980).